The primary structure comprises 154 residues: SsrA-binding protein (154 aa).

Belongs to the SmpB family.

Its subcellular location is the cytoplasm. Required for rescue of stalled ribosomes mediated by trans-translation. Binds to transfer-messenger RNA (tmRNA), required for stable association of tmRNA with ribosomes. tmRNA and SmpB together mimic tRNA shape, replacing the anticodon stem-loop with SmpB. tmRNA is encoded by the ssrA gene; the 2 termini fold to resemble tRNA(Ala) and it encodes a 'tag peptide', a short internal open reading frame. During trans-translation Ala-aminoacylated tmRNA acts like a tRNA, entering the A-site of stalled ribosomes, displacing the stalled mRNA. The ribosome then switches to translate the ORF on the tmRNA; the nascent peptide is terminated with the 'tag peptide' encoded by the tmRNA and targeted for degradation. The ribosome is freed to recommence translation, which seems to be the essential function of trans-translation. This chain is SsrA-binding protein, found in Solidesulfovibrio magneticus (strain ATCC 700980 / DSM 13731 / RS-1) (Desulfovibrio magneticus).